A 742-amino-acid chain; its full sequence is F-box only protein 30 (742 aa).

The TRAF-type zinc-finger motif lies at 49–108 (EHRLLCPFERVPCLNSNFGCPFTLARNKVAEHLEMCPASVVCCTMEWNRWPVSYSDRKSY). The interval 214 to 242 (SLQGTTNEMDEESNRESSQDRNAKDQDHL) is disordered. Basic and acidic residues predominate over residues 225-242 (ESNRESSQDRNAKDQDHL). Ser-379 carries the post-translational modification Phosphoserine. The 47-residue stretch at 607-653 (SDHLSSLPFEVLQHIAGFLDGFSLCQLACVSRLMRDICGSLLQSRGM) folds into the F-box domain.

In terms of assembly, part of a SCF (SKP1-cullin-F-box) protein ligase complex. Interacts with SKP1, CUL1 and RBX1/ROC1. Post-translationally, auto-ubiquitinated. May be neddylated. Neddylation may be required for E3 ligase activity.

The protein operates within protein modification; protein ubiquitination. Substrate-recognition component of the SCF (SKP1-CUL1-F-box protein)-type E3 ubiquitin ligase complex. Required for muscle atrophy following denervation. This Rattus norvegicus (Rat) protein is F-box only protein 30 (Fbxo30).